Here is a 173-residue protein sequence, read N- to C-terminus: Large ribosomal subunit protein uL16 (173 aa).

It belongs to the universal ribosomal protein uL16 family.

The polypeptide is Large ribosomal subunit protein uL16 (Methanococcus maripaludis (strain DSM 14266 / JCM 13030 / NBRC 101832 / S2 / LL)).